The following is a 475-amino-acid chain: MQETGGYKTEGYNVGSDKVDSDKTKTVLHQIVHDKEIWVAARKLQQPLTRFQNEITQSQRDFYHALQGDKTVFILECKKASPSKGVIRDNFNPAEIAGVYKHYASAISVLTDEKYFQGSFDFLPQVSAAVTQPVLCKDFIIDAYQIQLARFYHADAILLMLSVLDDEAYRQLAAVAHSLNMGVLTEASNAEELERAITLGAKVVGINNRDLRDLSIDLNRTRELAPRLPEGVTIISESGISHYRQVRELSQFANGFLIGSALMSEPDLNAAVRRVLLGENKVCGLTRAQDAATAYHAGAVYGGLIFVDSSPRYVDIASARTVISGAPLKYVGVFRHAEIETVRQTAEQLSLAAVQLHGHEDQQYINQLRKVLPADCQIWKALSVGDTMPERNLQQVERYVLDHGTGGTGQRFDWSLLADQALDNVLLAGGLGPDNCDVAAQLGCAGLDVNSGVESAPGIKDPQRIAAVFQALRVY.

Positions 1-279 (MQETGGYKTE…AAVRRVLLGE (279 aa)) are indole-3-glycerol phosphate synthase. The interval 280 to 475 (NKVCGLTRAQ…AAVFQALRVY (196 aa)) is N-(5'-phosphoribosyl)anthranilate isomerase.

The protein in the N-terminal section; belongs to the TrpC family. This sequence in the C-terminal section; belongs to the TrpF family. As to quaternary structure, monomer.

The catalysed reaction is N-(5-phospho-beta-D-ribosyl)anthranilate = 1-(2-carboxyphenylamino)-1-deoxy-D-ribulose 5-phosphate. The enzyme catalyses 1-(2-carboxyphenylamino)-1-deoxy-D-ribulose 5-phosphate + H(+) = (1S,2R)-1-C-(indol-3-yl)glycerol 3-phosphate + CO2 + H2O. Its pathway is amino-acid biosynthesis; L-tryptophan biosynthesis; L-tryptophan from chorismate: step 3/5. It functions in the pathway amino-acid biosynthesis; L-tryptophan biosynthesis; L-tryptophan from chorismate: step 4/5. Functionally, bifunctional enzyme that catalyzes two sequential steps of tryptophan biosynthetic pathway. The first reaction is catalyzed by the isomerase, coded by the TrpF domain; the second reaction is catalyzed by the synthase, coded by the TrpC domain. The sequence is that of Tryptophan biosynthesis protein TrpCF (trpC) from Yersinia pestis.